The following is a 194-amino-acid chain: Recombination protein RecR (194 aa).

The C4-type zinc-finger motif lies at 55 to 70 (CRECGNLAEGELCPIC). In terms of domain architecture, Toprim spans 78-171 (SLLAVVESVA…RVTRPAYGLP (94 aa)).

This sequence belongs to the RecR family.

Functionally, may play a role in DNA repair. It seems to be involved in an RecBC-independent recombinational process of DNA repair. It may act with RecF and RecO. This chain is Recombination protein RecR, found in Thermus thermophilus (strain ATCC BAA-163 / DSM 7039 / HB27).